Consider the following 519-residue polypeptide: MDEFHRYGKEDSSWQQCFLYPLFFQEDLYAISHDHYLDGSSSSESMEHFSSNDQFSFLTVKRLIGQIRQQNHSIVLFLNCDSNPLVDRNKSSYSESVLEGLTLVLEVPFSIRSKYSVEGMNEWKSFRSIHSIFPFLEEKFPHSNYILDTRIPYSIHPEILVRTFRRWIRDAPSLHPLRSVLYKYRNSPENFKRSIIVAPRVNTRFLLFLWNHYVYECESILVPLLKQSFHPRSSSHGSFPERTHFDRKIKNIIRISRRNSLKSIWSLKDPRIHYVRYGERSIIAIKGTHLLVKKCRYHLLIFWQCYFHLWSEPYRVCSHQLSKNCSSFLGYFLRVRMKSLLVRTKMLDELFITDLITDEFYPIVPIVPIIGLLAREKFCDISGRPISKLYWTSLTDDDILDRFDRIWKNLFHYYSGSFGRDGLYRIKYILSLSCAKTLACKHKSTIRVVRKELGPELFKKSFSKEREFDFPAFSSKAAARSQRERIWHSDIPQINPLANSWQKIQDLKSENGKLNLFDQ.

It belongs to the intron maturase 2 family. MatK subfamily.

It localises to the plastid. The protein resides in the chloroplast. Usually encoded in the trnK tRNA gene intron. Probably assists in splicing its own and other chloroplast group II introns. The chain is Maturase K from Keteleeria davidiana (David's keteleeria).